The sequence spans 227 residues: Germin-like protein subfamily T member 3 (227 aa).

Residues 1-26 (MAHISQISSFLSIVLIFLALCITLFT) form the signal peptide. C44 and C59 are joined by a disulfide. A Cupin type-1 domain is found at 71–219 (SGLNTPLNTS…AFKADSKTIN (149 aa)). An N-linked (GlcNAc...) asparagine glycan is attached at N78. Mn(2+) is bound by residues H119, H121, and E126. N-linked (GlcNAc...) asparagine glycosylation occurs at N143. Residue H165 coordinates Mn(2+).

It belongs to the germin family. As to quaternary structure, oligomer (believed to be a pentamer but probably hexamer).

The protein localises to the secreted. It localises to the extracellular space. It is found in the apoplast. May play a role in plant defense. Probably has no oxalate oxidase activity even if the active site is conserved. This is Germin-like protein subfamily T member 3 from Arabidopsis thaliana (Mouse-ear cress).